A 536-amino-acid polypeptide reads, in one-letter code: GMP synthase [glutamine-hydrolyzing] (536 aa).

A Glutamine amidotransferase type-1 domain is found at 4–206; it reads KILILDFGSQ…VLDICGARAD (203 aa). Cys85 serves as the catalytic Nucleophile. Residues His180 and Glu182 contribute to the active site. The region spanning 207–404 is the GMPS ATP-PPase domain; it reads WIMGDYISEA…LGLPYHMVYR (198 aa). 234–240 is a binding site for ATP; the sequence is SGGVDSS.

As to quaternary structure, homodimer.

The enzyme catalyses XMP + L-glutamine + ATP + H2O = GMP + L-glutamate + AMP + diphosphate + 2 H(+). The protein operates within purine metabolism; GMP biosynthesis; GMP from XMP (L-Gln route): step 1/1. Catalyzes the synthesis of GMP from XMP. The chain is GMP synthase [glutamine-hydrolyzing] from Albidiferax ferrireducens (strain ATCC BAA-621 / DSM 15236 / T118) (Rhodoferax ferrireducens).